A 500-amino-acid chain; its full sequence is Adenylosuccinate synthetase, chloroplastic (500 aa).

Residues 87–93 and 115–117 each bind GTP; these read GDEGKGK and GHT. Aspartate 88 functions as the Proton acceptor in the catalytic mechanism. The Mg(2+) site is built by aspartate 88 and glycine 115. IMP-binding positions include 88-91, 113-116, threonine 205, arginine 219, glutamine 299, threonine 314, and arginine 378; these read DEGK and NAGH. Histidine 116 serves as the catalytic Proton donor. 374–380 serves as a coordination point for substrate; it reads TTTGRPR. GTP is bound by residues arginine 380, 406–408, and 489–491; these read KLD and GIG.

It belongs to the adenylosuccinate synthetase family. Homodimer. Mg(2+) serves as cofactor.

The protein resides in the plastid. It is found in the chloroplast. It catalyses the reaction IMP + L-aspartate + GTP = N(6)-(1,2-dicarboxyethyl)-AMP + GDP + phosphate + 2 H(+). Its pathway is purine metabolism; AMP biosynthesis via de novo pathway; AMP from IMP: step 1/2. Plays an important role in the de novo pathway and in the salvage pathway of purine nucleotide biosynthesis. Catalyzes the first committed step in the biosynthesis of AMP from IMP. The chain is Adenylosuccinate synthetase, chloroplastic from Solanum bulbocastanum (Wild potato).